Reading from the N-terminus, the 198-residue chain is Holliday junction branch migration complex subunit RuvA (198 aa).

Residues 1–63 (MYDYIKGQLT…EDAHLLFGFH (63 aa)) form a domain I region. The segment at 64–142 (TKDEKDVFLK…EAPQETGNTK (79 aa)) is domain II. The segment at 143–147 (ARSNK) is flexible linker. A domain III region spans residues 148-198 (AGNTQLDEAIEALLALGYKATELKKIRAFFEGTSETAEQYIKSALKLLMKG).

It belongs to the RuvA family. Homotetramer. Forms an RuvA(8)-RuvB(12)-Holliday junction (HJ) complex. HJ DNA is sandwiched between 2 RuvA tetramers; dsDNA enters through RuvA and exits via RuvB. An RuvB hexamer assembles on each DNA strand where it exits the tetramer. Each RuvB hexamer is contacted by two RuvA subunits (via domain III) on 2 adjacent RuvB subunits; this complex drives branch migration. In the full resolvosome a probable DNA-RuvA(4)-RuvB(12)-RuvC(2) complex forms which resolves the HJ.

The protein resides in the cytoplasm. Functionally, the RuvA-RuvB-RuvC complex processes Holliday junction (HJ) DNA during genetic recombination and DNA repair, while the RuvA-RuvB complex plays an important role in the rescue of blocked DNA replication forks via replication fork reversal (RFR). RuvA specifically binds to HJ cruciform DNA, conferring on it an open structure. The RuvB hexamer acts as an ATP-dependent pump, pulling dsDNA into and through the RuvAB complex. HJ branch migration allows RuvC to scan DNA until it finds its consensus sequence, where it cleaves and resolves the cruciform DNA. This Streptococcus pyogenes serotype M18 (strain MGAS8232) protein is Holliday junction branch migration complex subunit RuvA.